Here is a 923-residue protein sequence, read N- to C-terminus: ATP-dependent Clp protease ATP-binding subunit ClpA homolog CD4B, chloroplastic (923 aa).

The Clp R domain occupies 92–234 (FERFTEKAIK…RTQVIRMVGE (143 aa)). Repeat stretches follow at residues 95–160 (FTEK…IGRG) and 170–234 (FTPR…MVGE). The i stretch occupies residues 255–502 (LEEYGTNLTK…RVRLRHAQLP (248 aa)). Position 300–307 (300–307 (GEPGVGKT)) interacts with ATP. The UVR domain maps to 509 to 544 (EKELRQITKEKNEAVRGQDFEKAGELRDREMDLKAQ). The segment at 569-760 (VTEADIQHIV…LLIMTSNVGS (192 aa)) is II. 643 to 650 (GPTGVGKS) is a binding site for ATP.

The protein belongs to the ClpA/ClpB family.

The protein resides in the plastid. It localises to the chloroplast. Functionally, may interact with a ClpP-like protease involved in degradation of denatured proteins in the chloroplast. The polypeptide is ATP-dependent Clp protease ATP-binding subunit ClpA homolog CD4B, chloroplastic (CD4B) (Solanum lycopersicum (Tomato)).